A 421-amino-acid chain; its full sequence is Histidine--tRNA ligase (421 aa).

It belongs to the class-II aminoacyl-tRNA synthetase family. As to quaternary structure, homodimer.

The protein localises to the cytoplasm. It carries out the reaction tRNA(His) + L-histidine + ATP = L-histidyl-tRNA(His) + AMP + diphosphate + H(+). This chain is Histidine--tRNA ligase, found in Francisella tularensis subsp. holarctica (strain FTNF002-00 / FTA).